Reading from the N-terminus, the 119-residue chain is Basic phospholipase A2 taipoxin alpha chain (119 aa).

7 cysteine pairs are disulfide-bonded: Cys-11–Cys-72, Cys-27–Cys-118, Cys-29–Cys-45, Cys-44–Cys-99, Cys-51–Cys-92, Cys-61–Cys-85, and Cys-79–Cys-90. 3 residues coordinate Ca(2+): Tyr-28, Gly-30, and Gly-32. His-48 is a catalytic residue. Asp-49 provides a ligand contact to Ca(2+). Residue Asp-93 is part of the active site.

This sequence belongs to the phospholipase A2 family. Group I subfamily. D49 sub-subfamily. Heterotrimer of alpha, beta, and gamma chains; non-covalently linked. The cofactor is Ca(2+). In terms of tissue distribution, expressed by the venom gland.

It localises to the secreted. It catalyses the reaction a 1,2-diacyl-sn-glycero-3-phosphocholine + H2O = a 1-acyl-sn-glycero-3-phosphocholine + a fatty acid + H(+). Functionally, heterotrimer: Snake venom phospholipase A2 (PLA2) heterotrimer that acts as a potent presynaptic neurotoxin by blocking synaptic transmission and synaptic vesicle recycling. May act by binding in a calcium-dependent fashion to neurotonal pentraxin-1 (NPTX1) and neurotonal pentraxin-2 (NPTX2), but not to neuronal pentraxin receptor (NPTXR). Also binds to taipoxin-associated calcium binding protein 49 (RCN2), a protein localized in the lumen of endoplasmic reticulum. Its function is as follows. Monomer (alpha chain): Snake venom phospholipase A2 (PLA2) alpha chain that possesses the same high enzymatic activity as the heterotrimer. PLA2 catalyzes the calcium-dependent hydrolysis of the 2-acyl groups in 3-sn-phosphoglycerides. The chain is Basic phospholipase A2 taipoxin alpha chain from Oxyuranus scutellatus scutellatus (Australian taipan).